Here is a 342-residue protein sequence, read N- to C-terminus: Photosystem II D2 protein (342 aa).

The Cytoplasmic portion of the chain corresponds to 1 to 29; that stretch reads ERGWFDILDDWLKRDRFVFVGWSGILLFP. The chain crosses the membrane as a helical span at residues 30-50; sequence CAYLALGGWLTGTTFVTSWYT. Residues 51–113 lie on the Lumenal side of the membrane; sequence HGLASSYLEG…IALHGAFGLI (63 aa). Histidine 107 contacts chlorophyll a. Residues 114–130 traverse the membrane as a helical segment; that stretch reads GFMLRQFEIARLVGVRP. Pheophytin a-binding residues include glutamine 119 and asparagine 132. At 131–141 the chain is on the cytoplasmic side; that stretch reads YNAIAFSAPIA. A helical membrane pass occupies residues 142 to 155; it reads VFVSVFLIYPLGQS. Over 156–196 the chain is Lumenal; that stretch reads SWFFAPSFGVAAIFRFLLFFQGFHNWTLNPFHMMGVAGVLG. Histidine 187 serves as a coordination point for chlorophyll a. A helical membrane pass occupies residues 197-217; the sequence is GALLCAIHGATVENTLFQDGE. A plastoquinone-binding residues include histidine 204 and phenylalanine 251. Residue histidine 204 coordinates Fe cation. Residues 218 to 267 lie on the Cytoplasmic side of the membrane; sequence GASTFRAFNPTQAEETYSMVTANRFWSQIFGIAFSNKRWLHFFMLFVPVT. Histidine 258 contributes to the Fe cation binding site. Residues 268–284 traverse the membrane as a helical segment; that stretch reads GLWMSAIGVVGLALNLR. Residues 285-342 lie on the Lumenal side of the membrane; that stretch reads SYDFISQEIRAAEDPEFETFYTKNLLLNEGIRAWMAPQDQPHENFVFPEEVLPRGNAL.

The protein belongs to the reaction center PufL/M/PsbA/D family. PSII is composed of 1 copy each of membrane proteins PsbA, PsbB, PsbC, PsbD, PsbE, PsbF, PsbH, PsbI, PsbJ, PsbK, PsbL, PsbM, PsbT, PsbX, PsbY, PsbZ, Psb30/Ycf12, peripheral proteins PsbO, CyanoQ (PsbQ), PsbU, PsbV and a large number of cofactors. It forms dimeric complexes. It depends on The D1/D2 heterodimer binds P680, chlorophylls that are the primary electron donor of PSII, and subsequent electron acceptors. It shares a non-heme iron and each subunit binds pheophytin, quinone, additional chlorophylls, carotenoids and lipids. There is also a Cl(-1) ion associated with D1 and D2, which is required for oxygen evolution. The PSII complex binds additional chlorophylls, carotenoids and specific lipids. as a cofactor.

The protein localises to the cellular thylakoid membrane. It carries out the reaction 2 a plastoquinone + 4 hnu + 2 H2O = 2 a plastoquinol + O2. Photosystem II (PSII) is a light-driven water:plastoquinone oxidoreductase that uses light energy to abstract electrons from H(2)O, generating O(2) and a proton gradient subsequently used for ATP formation. It consists of a core antenna complex that captures photons, and an electron transfer chain that converts photonic excitation into a charge separation. The D1/D2 (PsbA/PsbD) reaction center heterodimer binds P680, the primary electron donor of PSII as well as several subsequent electron acceptors. D2 is needed for assembly of a stable PSII complex. The chain is Photosystem II D2 protein from Thermostichus vulcanus (Synechococcus vulcanus).